The following is a 226-amino-acid chain: 2-C-methyl-D-erythritol 4-phosphate cytidylyltransferase (226 aa).

The protein belongs to the IspD/TarI cytidylyltransferase family. IspD subfamily.

The enzyme catalyses 2-C-methyl-D-erythritol 4-phosphate + CTP + H(+) = 4-CDP-2-C-methyl-D-erythritol + diphosphate. Its pathway is isoprenoid biosynthesis; isopentenyl diphosphate biosynthesis via DXP pathway; isopentenyl diphosphate from 1-deoxy-D-xylulose 5-phosphate: step 2/6. Its function is as follows. Catalyzes the formation of 4-diphosphocytidyl-2-C-methyl-D-erythritol from CTP and 2-C-methyl-D-erythritol 4-phosphate (MEP). This is 2-C-methyl-D-erythritol 4-phosphate cytidylyltransferase from Rhodococcus jostii (strain RHA1).